The chain runs to 653 residues: Intermembrane lipid transfer protein vps13l (653 aa).

A B box-type zinc finger spans residues 5-49 (ISELKCQQHDKLVTIYCCACDAYFCKKCDKEKHSQDDNQEDSLHI). Positions 10, 13, 32, and 37 each coordinate Zn(2+). Disordered regions lie at residues 159-232 (NLID…NRKK), 248-420 (HILN…EDDS), and 627-653 (EKSN…PNEN). Residues 195-213 (SPSPSRSSESNSTTNNNNN) are compositionally biased toward low complexity. The segment covering 266–277 (DYDDDDDNDDDN) has biased composition (acidic residues). Residues 278–293 (NNNNNNNNNNNNNNNN) show a composition bias toward low complexity. The span at 314-330 (ETEKEIENVENKIDNKP) shows a compositional bias: basic and acidic residues. Residues 366–381 (IFEEEEEEEEDEDEVG) are compositionally biased toward acidic residues.

The protein belongs to the VPS13 family.

The protein localises to the membrane. Mediates the transfer of lipids between membranes at organelle contact sites. The chain is Intermembrane lipid transfer protein vps13l (vps13l) from Dictyostelium discoideum (Social amoeba).